A 913-amino-acid polypeptide reads, in one-letter code: MKKAIKLNLITLGLINTIGMTITQAQAEETLGQIDVVEKVISNDKKPFTEAKAKSTRENVFKETQTIDQVIRSIPGAFTQQDKGSGVVSVNIRGENGLGRVNTMVDGVTQTFYSTALDSGQSGGSSQFGAAIDPNFIAGVDVNKSNFSGASGINALAGSANFRTLGVNDVITDDKPFGIILKGMTGSNATKSNFMTMAAGRKWLDNGGYVGVVYGYSQREVSQDYRIGGGERLASLGQDILAKEKEAYFRNAGYILNPEGQWTPDLSKKHWSCNKPDYQKNGDCSYYRIGSAAKTRREILQELLTNGKKPKDIEKLQKGNDGIEETDKSFERNKDQYSVAPIEPGSLQSRSRSHLLKFEYGDDHQNLGAQLRTLDNKIGSRKIENRNYQVNYNFNNNSYLDLNLMAAHNIGKTIYPKGGFFAGWQVADKLITKNVANIVDINNSHTFLLPKEIDLKTTLGFNYFTNEYSKNRFPEELSLFYNDASHDQGLYSHSKRGRYSGTKSLLPQRSVILQPSGKQKFKTVYFDTALSKGIYHLNYSVNFTHYAFNGEYVGYENTAGQQINEPILHKSGHKKAFNHSATLSAELSDYFMPFFTYSRTHRMPNIQEMFFSQVSNAGVNTALKPEQSDTYQLGFNTYKKGLFTQDDVLGVKLVGYRSFIKNYIHNVYGVWWRDGMPTWAESNGFKYTIAHQNYKPIVKKSGVELEINYDMGRFFANVSYAYQRTNQPTNYADASPRPNNASQEDILKQGYGLSRVSMLPKDYGRLELGTRWFDQKLTLGLAARYYGKSKRATIEEEYINGSRFKKNTLRRENYYAVKKTEDIKKQPIILDLHVSYEPIKDLIIKAEVQNLLDKRYVDPLDAGNDAASQRYYSSLNNSIECAQDSSACGGSDKTVLYNFARGRTYILSLNYKF.

The first 27 residues, M1 to A27, serve as a signal peptide directing secretion. In terms of domain architecture, TBDR plug spans S42–L165. Residues P176–F913 enclose the TBDR beta-barrel domain. Positions L896–F913 match the TonB C-terminal box motif.

Belongs to the TonB-dependent receptor family.

The protein localises to the cell outer membrane. In terms of biological role, probable receptor, TonB-dependent. This chain is Probable TonB-dependent receptor HI_1217, found in Haemophilus influenzae (strain ATCC 51907 / DSM 11121 / KW20 / Rd).